Reading from the N-terminus, the 496-residue chain is NADP-dependent glyceraldehyde-3-phosphate dehydrogenase (496 aa).

Residues arginine 116 and 169 to 170 (NY) contribute to the substrate site. 3 residues coordinate NADP(+): lysine 192, threonine 195, and aspartate 230. 245–249 (GGDTG) contacts NAD(+). Glutamate 264 functions as the Proton acceptor in the catalytic mechanism. Position 297-299 (297-299 (RCT)) interacts with substrate. Cysteine 298 (nucleophile) is an active-site residue. Glutamate 391 serves as a coordination point for NADP(+). Serine 404 carries the post-translational modification Phosphoserine. Substrate is bound at residue arginine 451.

The protein belongs to the aldehyde dehydrogenase family. In terms of assembly, interacts with 14-3-3 protein when phosphorylated. This interaction is released by divalent cations. In terms of processing, phosphorylated in shoots and non-photosynthetic tissues, but not in leaves.

It is found in the cytoplasm. The catalysed reaction is D-glyceraldehyde 3-phosphate + NADP(+) + H2O = (2R)-3-phosphoglycerate + NADPH + 2 H(+). Insensitive to magnesium or calcium when dephosphorylated. When phosphorylated, 3-fold activation by magnesium or calcium, 2-fold activation by potassium, inhibited by ADP and AMP and insensitive to ATP or PPi. Important as a means of generating NADPH for biosynthetic reactions. The chain is NADP-dependent glyceraldehyde-3-phosphate dehydrogenase (GAPN) from Triticum aestivum (Wheat).